Here is a 318-residue protein sequence, read N- to C-terminus: Methionyl-tRNA formyltransferase (318 aa).

115 to 118 is a (6S)-5,6,7,8-tetrahydrofolate binding site; sequence SLLP.

It belongs to the Fmt family.

The catalysed reaction is L-methionyl-tRNA(fMet) + (6R)-10-formyltetrahydrofolate = N-formyl-L-methionyl-tRNA(fMet) + (6S)-5,6,7,8-tetrahydrofolate + H(+). Attaches a formyl group to the free amino group of methionyl-tRNA(fMet). The formyl group appears to play a dual role in the initiator identity of N-formylmethionyl-tRNA by promoting its recognition by IF2 and preventing the misappropriation of this tRNA by the elongation apparatus. The chain is Methionyl-tRNA formyltransferase from Deinococcus radiodurans (strain ATCC 13939 / DSM 20539 / JCM 16871 / CCUG 27074 / LMG 4051 / NBRC 15346 / NCIMB 9279 / VKM B-1422 / R1).